We begin with the raw amino-acid sequence, 310 residues long: Olfactory receptor 4C11 (310 aa).

The Extracellular segment spans residues 1–23 (MQQNNSVPEFILLGLTQDPLRQK). N-linked (GlcNAc...) asparagine glycosylation occurs at N4. A helical membrane pass occupies residues 24–47 (IVFVIFLIFYMGTVVGNMLIIVTI). At 48 to 55 (KSSRTLGS) the chain is on the cytoplasmic side. A helical membrane pass occupies residues 56-77 (PMYFFLFYLSFADSCFSTSTAP). The Extracellular portion of the chain corresponds to 78-98 (RLIVDALSEKKIITYNECMTQ). C95 and C187 are joined by a disulfide. The helical transmembrane segment at 99 to 118 (VFALHLFGCMEIFVLILMAV) threads the bilayer. Over 119-137 (DRYVAICKPLRYPTIMSQQ) the chain is Cytoplasmic. Residues 138–156 (VCIILIVLAWIGSLIHSTA) traverse the membrane as a helical segment. Residues 157 to 193 (QIILALRLPFCGPYLIDHYCCDLQPLLKLACMDTYMI) are Extracellular-facing. Residues 194–217 (NLLLVSNSGAICSSSFMILIISYI) traverse the membrane as a helical segment. Topologically, residues 218–233 (VILHSLRNHSAKGKKK) are cytoplasmic. Residues 234–256 (ALSACTSHIIVVILFFGPCIFIY) traverse the membrane as a helical segment. The Extracellular segment spans residues 257-267 (TRPPTTFPMDK). Residues 268-287 (MVAVFYTIGTPFLNPLIYTL) form a helical membrane-spanning segment. At 288-310 (RNAEVKNAMRKLWHGKIISENKG) the chain is on the cytoplasmic side.

The protein belongs to the G-protein coupled receptor 1 family.

The protein localises to the cell membrane. In terms of biological role, odorant receptor. This Homo sapiens (Human) protein is Olfactory receptor 4C11 (OR4C11).